The chain runs to 515 residues: Maturase K (515 aa).

It belongs to the intron maturase 2 family. MatK subfamily.

The protein localises to the plastid. It localises to the chloroplast. Functionally, usually encoded in the trnK tRNA gene intron. Probably assists in splicing its own and other chloroplast group II introns. The sequence is that of Maturase K from Pinus contorta (Shore pine).